The following is a 697-amino-acid chain: Elongation factor G (697 aa).

One can recognise a tr-type G domain in the interval 8–287 (ERVRNIGIAA…AVVDYLPAPT (280 aa)). Residues 17 to 24 (AHIDAGKT), 81 to 85 (DTPGH), and 135 to 138 (NKMD) each bind GTP.

Belongs to the TRAFAC class translation factor GTPase superfamily. Classic translation factor GTPase family. EF-G/EF-2 subfamily.

Its subcellular location is the cytoplasm. In terms of biological role, catalyzes the GTP-dependent ribosomal translocation step during translation elongation. During this step, the ribosome changes from the pre-translocational (PRE) to the post-translocational (POST) state as the newly formed A-site-bound peptidyl-tRNA and P-site-bound deacylated tRNA move to the P and E sites, respectively. Catalyzes the coordinated movement of the two tRNA molecules, the mRNA and conformational changes in the ribosome. In Arthrospira platensis (Spirulina platensis), this protein is Elongation factor G (fusA).